A 154-amino-acid chain; its full sequence is 6,7-dimethyl-8-ribityllumazine synthase (154 aa).

5-amino-6-(D-ribitylamino)uracil is bound by residues phenylalanine 23, 57-59, and 81-83; these read AYE and AVI. (2S)-2-hydroxy-3-oxobutyl phosphate is bound at residue 86–87; sequence GT. Histidine 89 acts as the Proton donor in catalysis. Phenylalanine 114 contacts 5-amino-6-(D-ribitylamino)uracil. Arginine 128 is a binding site for (2S)-2-hydroxy-3-oxobutyl phosphate.

The protein belongs to the DMRL synthase family. In terms of assembly, forms an icosahedral capsid composed of 60 subunits, arranged as a dodecamer of pentamers.

The catalysed reaction is (2S)-2-hydroxy-3-oxobutyl phosphate + 5-amino-6-(D-ribitylamino)uracil = 6,7-dimethyl-8-(1-D-ribityl)lumazine + phosphate + 2 H2O + H(+). The protein operates within cofactor biosynthesis; riboflavin biosynthesis; riboflavin from 2-hydroxy-3-oxobutyl phosphate and 5-amino-6-(D-ribitylamino)uracil: step 1/2. Catalyzes the formation of 6,7-dimethyl-8-ribityllumazine by condensation of 5-amino-6-(D-ribitylamino)uracil with 3,4-dihydroxy-2-butanone 4-phosphate. This is the penultimate step in the biosynthesis of riboflavin. The protein is 6,7-dimethyl-8-ribityllumazine synthase of Acidithiobacillus ferrooxidans (strain ATCC 23270 / DSM 14882 / CIP 104768 / NCIMB 8455) (Ferrobacillus ferrooxidans (strain ATCC 23270)).